The chain runs to 56 residues: Large ribosomal subunit protein bL32 (56 aa).

The segment at 1–21 (MAVQKNKPTRSKRGMRRSHDA) is disordered. Over residues 7-16 (KPTRSKRGMR) the composition is skewed to basic residues.

The protein belongs to the bacterial ribosomal protein bL32 family.

The protein is Large ribosomal subunit protein bL32 of Hamiltonella defensa subsp. Acyrthosiphon pisum (strain 5AT).